We begin with the raw amino-acid sequence, 127 residues long: Holo-[acyl-carrier-protein] synthase (127 aa).

Residues Asp8 and Glu59 each coordinate Mg(2+).

The protein belongs to the P-Pant transferase superfamily. AcpS family. The cofactor is Mg(2+).

Its subcellular location is the cytoplasm. The enzyme catalyses apo-[ACP] + CoA = holo-[ACP] + adenosine 3',5'-bisphosphate + H(+). Transfers the 4'-phosphopantetheine moiety from coenzyme A to a Ser of acyl-carrier-protein. In Rickettsia bellii (strain OSU 85-389), this protein is Holo-[acyl-carrier-protein] synthase.